Here is a 258-residue protein sequence, read N- to C-terminus: Methylthioribulose-1-phosphate dehydratase (258 aa).

A disordered region spans residues 1–21; the sequence is MCSPTTENNNNNNDHLVQSSD. Cys105 is a binding site for substrate. Zn(2+)-binding residues include His123 and His125. The Proton donor/acceptor role is filled by Glu153. His210 contributes to the Zn(2+) binding site.

Belongs to the aldolase class II family. MtnB subfamily. The cofactor is Zn(2+).

It localises to the cytoplasm. It carries out the reaction 5-(methylsulfanyl)-D-ribulose 1-phosphate = 5-methylsulfanyl-2,3-dioxopentyl phosphate + H2O. Its pathway is amino-acid biosynthesis; L-methionine biosynthesis via salvage pathway; L-methionine from S-methyl-5-thio-alpha-D-ribose 1-phosphate: step 2/6. In terms of biological role, catalyzes the dehydration of methylthioribulose-1-phosphate (MTRu-1-P) into 2,3-diketo-5-methylthiopentyl-1-phosphate (DK-MTP-1-P). This Neurospora crassa (strain ATCC 24698 / 74-OR23-1A / CBS 708.71 / DSM 1257 / FGSC 987) protein is Methylthioribulose-1-phosphate dehydratase.